A 62-amino-acid chain; its full sequence is Large ribosomal subunit protein bL28 (62 aa).

The protein belongs to the bacterial ribosomal protein bL28 family.

This is Large ribosomal subunit protein bL28 from Halalkalibacterium halodurans (strain ATCC BAA-125 / DSM 18197 / FERM 7344 / JCM 9153 / C-125) (Bacillus halodurans).